Reading from the N-terminus, the 150-residue chain is Transcriptional repressor NrdR (150 aa).

The segment at 3–34 is a zinc-finger region; that stretch reads CPFCNFEESKVVDSRATDDNTTIRRRRECLNC. Residues 49 to 139 enclose the ATP-cone domain; it reads VLVVKKDLTR…VYRQFKDINT (91 aa).

It belongs to the NrdR family. It depends on Zn(2+) as a cofactor.

Its function is as follows. Negatively regulates transcription of bacterial ribonucleotide reductase nrd genes and operons by binding to NrdR-boxes. The protein is Transcriptional repressor NrdR of Clostridium botulinum (strain Alaska E43 / Type E3).